The following is a 75-amino-acid chain: MPQSSRYSDEHVEQLLSELVSVLEKHRTPTDLSLMVLGNMVTNLINTSIAPAQRKVLARSFAEALQASVREDKAH.

This sequence belongs to the UPF0352 family.

In Yersinia pseudotuberculosis serotype I (strain IP32953), this protein is UPF0352 protein YPTB1297.